The primary structure comprises 286 residues: ATP synthase gamma chain (286 aa).

The protein belongs to the ATPase gamma chain family. As to quaternary structure, F-type ATPases have 2 components, CF(1) - the catalytic core - and CF(0) - the membrane proton channel. CF(1) has five subunits: alpha(3), beta(3), gamma(1), delta(1), epsilon(1). CF(0) has three main subunits: a, b and c.

The protein localises to the cell inner membrane. In terms of biological role, produces ATP from ADP in the presence of a proton gradient across the membrane. The gamma chain is believed to be important in regulating ATPase activity and the flow of protons through the CF(0) complex. In Pseudomonas fluorescens (strain Pf0-1), this protein is ATP synthase gamma chain.